We begin with the raw amino-acid sequence, 259 residues long: Type III pantothenate kinase (259 aa).

6–13 provides a ligand contact to ATP; it reads DCGNTNTV. Residue 107–110 participates in substrate binding; sequence GPDR. Aspartate 109 acts as the Proton acceptor in catalysis. Aspartate 129 contacts K(+). Position 132 (threonine 132) interacts with ATP. Threonine 184 lines the substrate pocket.

The protein belongs to the type III pantothenate kinase family. Homodimer. The cofactor is NH4(+). K(+) serves as cofactor.

The protein resides in the cytoplasm. It carries out the reaction (R)-pantothenate + ATP = (R)-4'-phosphopantothenate + ADP + H(+). Its pathway is cofactor biosynthesis; coenzyme A biosynthesis; CoA from (R)-pantothenate: step 1/5. Its function is as follows. Catalyzes the phosphorylation of pantothenate (Pan), the first step in CoA biosynthesis. The sequence is that of Type III pantothenate kinase from Ruegeria pomeroyi (strain ATCC 700808 / DSM 15171 / DSS-3) (Silicibacter pomeroyi).